The primary structure comprises 129 residues: Trefoil factor 2 (129 aa).

An N-terminal signal peptide occupies residues 1 to 23 (MGPRGAPLLAVVLVLGLHALVEG). 2 consecutive P-type domains span residues 29–73 (CRCS…FHPL) and 79–122 (EQCV…FFPQ). 7 disulfide bridges follow: Cys29/Cys127, Cys31/Cys58, Cys42/Cys57, Cys52/Cys69, Cys81/Cys107, Cys91/Cys106, and Cys101/Cys118.

As to expression, stomach and pancreas.

The protein resides in the secreted. In terms of biological role, inhibits gastrointestinal motility and gastric acid secretion. Could function as a structural component of gastric mucus, possibly by stabilizing glycoproteins in the mucus gel through interactions with carbohydrate side chains. The sequence is that of Trefoil factor 2 (Tff2) from Mus musculus (Mouse).